The primary structure comprises 156 residues: Endoribonuclease YbeY (156 aa).

Zn(2+) contacts are provided by His-122, His-126, and His-132.

It belongs to the endoribonuclease YbeY family. Zn(2+) is required as a cofactor.

Its subcellular location is the cytoplasm. Functionally, single strand-specific metallo-endoribonuclease involved in late-stage 70S ribosome quality control and in maturation of the 3' terminus of the 16S rRNA. The protein is Endoribonuclease YbeY of Bacillus cereus (strain ATCC 10987 / NRS 248).